The following is a 184-amino-acid chain: ATP synthase subunit b, chloroplastic (184 aa).

Residues 26–48 (ILATNLINLSVVLGVLIFFGKGV) form a helical membrane-spanning segment.

Belongs to the ATPase B chain family. As to quaternary structure, F-type ATPases have 2 components, F(1) - the catalytic core - and F(0) - the membrane proton channel. F(1) has five subunits: alpha(3), beta(3), gamma(1), delta(1), epsilon(1). F(0) has four main subunits: a(1), b(1), b'(1) and c(10-14). The alpha and beta chains form an alternating ring which encloses part of the gamma chain. F(1) is attached to F(0) by a central stalk formed by the gamma and epsilon chains, while a peripheral stalk is formed by the delta, b and b' chains.

It is found in the plastid. It localises to the chloroplast thylakoid membrane. Functionally, f(1)F(0) ATP synthase produces ATP from ADP in the presence of a proton or sodium gradient. F-type ATPases consist of two structural domains, F(1) containing the extramembraneous catalytic core and F(0) containing the membrane proton channel, linked together by a central stalk and a peripheral stalk. During catalysis, ATP synthesis in the catalytic domain of F(1) is coupled via a rotary mechanism of the central stalk subunits to proton translocation. Component of the F(0) channel, it forms part of the peripheral stalk, linking F(1) to F(0). This chain is ATP synthase subunit b, chloroplastic, found in Calycanthus floridus var. glaucus (Eastern sweetshrub).